The chain runs to 146 residues: Ribonuclease H (146 aa).

The 138-residue stretch at 1–138 (MYAWTDGACR…ADALANRGID (138 aa)) folds into the RNase H type-1 domain. Residues aspartate 6, glutamate 44, aspartate 66, and aspartate 130 each contribute to the Mg(2+) site.

It belongs to the RNase H family. As to quaternary structure, monomer. The cofactor is Mg(2+).

The protein localises to the cytoplasm. It carries out the reaction Endonucleolytic cleavage to 5'-phosphomonoester.. Its function is as follows. Endonuclease that specifically degrades the RNA of RNA-DNA hybrids. The protein is Ribonuclease H of Alkalilimnicola ehrlichii (strain ATCC BAA-1101 / DSM 17681 / MLHE-1).